The chain runs to 388 residues: Diphosphomevalonate decarboxylase (388 aa).

Residues 19–22 (YWGK), Arg-74, 153–158 (SGSACR), and Thr-209 contribute to the (R)-5-diphosphomevalonate site. A disordered region spans residues 367 to 388 (QGPQGSSESLINDKGLPKAVAN).

Belongs to the diphosphomevalonate decarboxylase family. Homodimer.

The enzyme catalyses (R)-5-diphosphomevalonate + ATP = isopentenyl diphosphate + ADP + phosphate + CO2. Its pathway is isoprenoid biosynthesis; isopentenyl diphosphate biosynthesis via mevalonate pathway; isopentenyl diphosphate from (R)-mevalonate: step 3/3. Diphosphomevalonate decarboxylase; part of the second module of ergosterol biosynthesis pathway that includes the middle steps of the pathway. The second module is carried out in the vacuole and involves the formation of farnesyl diphosphate, which is also an important intermediate in the biosynthesis of ubiquinone, dolichol, heme and prenylated proteins. Activity by the mevalonate kinase ERG12 first converts mevalonate into 5-phosphomevalonate. 5-phosphomevalonate is then further converted to 5-diphosphomevalonate by the phosphomevalonate kinase ERG8. The diphosphomevalonate decarboxylase MVD1/ERG19 then produces isopentenyl diphosphate. The isopentenyl-diphosphate delta-isomerase IDI1 then catalyzes the 1,3-allylic rearrangement of the homoallylic substrate isopentenyl (IPP) to its highly electrophilic allylic isomer, dimethylallyl diphosphate (DMAPP). Finally the farnesyl diphosphate synthase ERG20 catalyzes the sequential condensation of isopentenyl pyrophosphate with dimethylallyl pyrophosphate, and then with the resultant geranylpyrophosphate to the ultimate product farnesyl pyrophosphate. In Debaryomyces hansenii (strain ATCC 36239 / CBS 767 / BCRC 21394 / JCM 1990 / NBRC 0083 / IGC 2968) (Yeast), this protein is Diphosphomevalonate decarboxylase.